Consider the following 296-residue polypeptide: Acetylglutamate kinase (296 aa).

Residues glycine 67–glycine 68, arginine 89, and asparagine 194 contribute to the substrate site.

This sequence belongs to the acetylglutamate kinase family. ArgB subfamily.

It is found in the cytoplasm. It carries out the reaction N-acetyl-L-glutamate + ATP = N-acetyl-L-glutamyl 5-phosphate + ADP. The protein operates within amino-acid biosynthesis; L-arginine biosynthesis; N(2)-acetyl-L-ornithine from L-glutamate: step 2/4. In terms of biological role, catalyzes the ATP-dependent phosphorylation of N-acetyl-L-glutamate. In Brucella abortus (strain S19), this protein is Acetylglutamate kinase.